A 437-amino-acid polypeptide reads, in one-letter code: ATP-dependent protease ATPase subunit HslU (437 aa).

Residues Val-18, Gly-60–Glu-65, Asp-249, Glu-315, and Arg-387 each bind ATP.

Belongs to the ClpX chaperone family. HslU subfamily. In terms of assembly, a double ring-shaped homohexamer of HslV is capped on each side by a ring-shaped HslU homohexamer. The assembly of the HslU/HslV complex is dependent on binding of ATP.

The protein resides in the cytoplasm. ATPase subunit of a proteasome-like degradation complex; this subunit has chaperone activity. The binding of ATP and its subsequent hydrolysis by HslU are essential for unfolding of protein substrates subsequently hydrolyzed by HslV. HslU recognizes the N-terminal part of its protein substrates and unfolds these before they are guided to HslV for hydrolysis. This chain is ATP-dependent protease ATPase subunit HslU, found in Rhodospirillum centenum (strain ATCC 51521 / SW).